The primary structure comprises 457 residues: Phosphoglucosamine mutase (457 aa).

The Phosphoserine intermediate role is filled by S103. S103, D244, D246, and D248 together coordinate Mg(2+). S103 bears the Phosphoserine mark.

Belongs to the phosphohexose mutase family. It depends on Mg(2+) as a cofactor. In terms of processing, activated by phosphorylation.

It carries out the reaction alpha-D-glucosamine 1-phosphate = D-glucosamine 6-phosphate. Its function is as follows. Catalyzes the conversion of glucosamine-6-phosphate to glucosamine-1-phosphate. The sequence is that of Phosphoglucosamine mutase from Granulibacter bethesdensis (strain ATCC BAA-1260 / CGDNIH1).